Reading from the N-terminus, the 621-residue chain is Pre-mRNA-processing protein 45 (621 aa).

Disordered stretches follow at residues 1-73, 137-164, 220-251, 347-438, and 542-621; these read MSAT…YANG, SQRT…SNTE, AQRD…RSPP, RARE…ELRM, and GKND…EHDS. Low complexity predominate over residues 36–51; sequence PSTSSSSSALVSTSSP. Basic and acidic residues-rich tracts occupy residues 140–164 and 220–229; these read TDIK…SNTE and AQRDPLEPPR. A compositionally biased stretch (pro residues) spans 239–248; it reads PPSPPPPVLR. Residues 364 to 380 are compositionally biased toward basic and acidic residues; sequence GRDDDVASRLADSDARP. A compositionally biased stretch (acidic residues) spans 403-417; the sequence is DSDESAASDEEDDEG. Basic and acidic residues-rich tracts occupy residues 418–437 and 594–621; these read ARER…RELR and EDAK…EHDS.

The protein belongs to the SNW family. Associated with the spliceosome.

The protein resides in the nucleus. Its function is as follows. Involved in pre-mRNA splicing. The chain is Pre-mRNA-processing protein 45 (PRP45) from Mycosarcoma maydis (Corn smut fungus).